The chain runs to 215 residues: Glycerol-3-phosphate acyltransferase (215 aa).

5 helical membrane-spanning segments follow: residues 1 to 21 (MAFL…SIPT), 57 to 77 (IFVL…VKLW), 85 to 105 (MIPL…AVLG), 126 to 146 (VLLV…LAML), and 165 to 185 (VLMF…IVGL).

The protein belongs to the PlsY family. As to quaternary structure, probably interacts with PlsX.

The protein resides in the cell inner membrane. It carries out the reaction an acyl phosphate + sn-glycerol 3-phosphate = a 1-acyl-sn-glycero-3-phosphate + phosphate. It participates in lipid metabolism; phospholipid metabolism. In terms of biological role, catalyzes the transfer of an acyl group from acyl-phosphate (acyl-PO(4)) to glycerol-3-phosphate (G3P) to form lysophosphatidic acid (LPA). This enzyme utilizes acyl-phosphate as fatty acyl donor, but not acyl-CoA or acyl-ACP. This is Glycerol-3-phosphate acyltransferase from Crocosphaera subtropica (strain ATCC 51142 / BH68) (Cyanothece sp. (strain ATCC 51142)).